Here is a 170-residue protein sequence, read N- to C-terminus: Peptide deformylase (170 aa).

Fe cation contacts are provided by cysteine 94 and histidine 136. Residue glutamate 137 is part of the active site. Histidine 140 lines the Fe cation pocket.

This sequence belongs to the polypeptide deformylase family. Requires Fe(2+) as cofactor.

The catalysed reaction is N-terminal N-formyl-L-methionyl-[peptide] + H2O = N-terminal L-methionyl-[peptide] + formate. Its function is as follows. Removes the formyl group from the N-terminal Met of newly synthesized proteins. Requires at least a dipeptide for an efficient rate of reaction. N-terminal L-methionine is a prerequisite for activity but the enzyme has broad specificity at other positions. The sequence is that of Peptide deformylase from Stenotrophomonas maltophilia (strain K279a).